We begin with the raw amino-acid sequence, 258 residues long: Acyl-[acyl-carrier-protein]--UDP-N-acetylglucosamine O-acyltransferase (258 aa).

It belongs to the transferase hexapeptide repeat family. LpxA subfamily. In terms of assembly, homotrimer.

It localises to the cytoplasm. It carries out the reaction a (3R)-hydroxyacyl-[ACP] + UDP-N-acetyl-alpha-D-glucosamine = a UDP-3-O-[(3R)-3-hydroxyacyl]-N-acetyl-alpha-D-glucosamine + holo-[ACP]. It participates in glycolipid biosynthesis; lipid IV(A) biosynthesis; lipid IV(A) from (3R)-3-hydroxytetradecanoyl-[acyl-carrier-protein] and UDP-N-acetyl-alpha-D-glucosamine: step 1/6. Its function is as follows. Involved in the biosynthesis of lipid A, a phosphorylated glycolipid that anchors the lipopolysaccharide to the outer membrane of the cell. This Pseudomonas syringae pv. syringae (strain B728a) protein is Acyl-[acyl-carrier-protein]--UDP-N-acetylglucosamine O-acyltransferase.